The primary structure comprises 198 residues: Holliday junction branch migration complex subunit RuvA (198 aa).

The domain I stretch occupies residues 1 to 63 (MYDYIKGQLT…EDAQLLFGFH (63 aa)). The segment at 64–142 (SEEEKDVFLK…EAPKEESSKP (79 aa)) is domain II. The tract at residues 143–147 (PKAKQ) is flexible linker. Positions 148–198 (QGNEQLDEAVEALLALGYKATELKKIRAFFEGTSETAEQYIKSALKMLMKG) are domain III.

Belongs to the RuvA family. Homotetramer. Forms an RuvA(8)-RuvB(12)-Holliday junction (HJ) complex. HJ DNA is sandwiched between 2 RuvA tetramers; dsDNA enters through RuvA and exits via RuvB. An RuvB hexamer assembles on each DNA strand where it exits the tetramer. Each RuvB hexamer is contacted by two RuvA subunits (via domain III) on 2 adjacent RuvB subunits; this complex drives branch migration. In the full resolvosome a probable DNA-RuvA(4)-RuvB(12)-RuvC(2) complex forms which resolves the HJ.

The protein resides in the cytoplasm. Functionally, the RuvA-RuvB-RuvC complex processes Holliday junction (HJ) DNA during genetic recombination and DNA repair, while the RuvA-RuvB complex plays an important role in the rescue of blocked DNA replication forks via replication fork reversal (RFR). RuvA specifically binds to HJ cruciform DNA, conferring on it an open structure. The RuvB hexamer acts as an ATP-dependent pump, pulling dsDNA into and through the RuvAB complex. HJ branch migration allows RuvC to scan DNA until it finds its consensus sequence, where it cleaves and resolves the cruciform DNA. In Streptococcus equi subsp. equi (strain 4047), this protein is Holliday junction branch migration complex subunit RuvA.